The chain runs to 116 residues: Large ribosomal subunit protein uL18 (116 aa).

It belongs to the universal ribosomal protein uL18 family. In terms of assembly, part of the 50S ribosomal subunit; part of the 5S rRNA/L5/L18/L25 subcomplex. Contacts the 5S and 23S rRNAs.

In terms of biological role, this is one of the proteins that bind and probably mediate the attachment of the 5S RNA into the large ribosomal subunit, where it forms part of the central protuberance. In Shewanella oneidensis (strain ATCC 700550 / JCM 31522 / CIP 106686 / LMG 19005 / NCIMB 14063 / MR-1), this protein is Large ribosomal subunit protein uL18.